Consider the following 151-residue polypeptide: Large ribosomal subunit protein uL13 (151 aa).

This sequence belongs to the universal ribosomal protein uL13 family. Part of the 50S ribosomal subunit.

Functionally, this protein is one of the early assembly proteins of the 50S ribosomal subunit, although it is not seen to bind rRNA by itself. It is important during the early stages of 50S assembly. This Nostoc sp. (strain PCC 7120 / SAG 25.82 / UTEX 2576) protein is Large ribosomal subunit protein uL13.